We begin with the raw amino-acid sequence, 161 residues long: Non-secretory ribonuclease (161 aa).

An N-terminal signal peptide occupies residues 1 to 27; the sequence is MVPKLFTSQICLLLLLGLLAVEGSLHV. C-linked (Man) tryptophan glycosylation occurs at Trp-34. His-42 serves as the catalytic Proton acceptor. A glycan (N-linked (GlcNAc...) asparagine) is linked at Asn-44. Intrachain disulfides connect Cys-50/Cys-110, Cys-64/Cys-123, Cys-82/Cys-138, and Cys-89/Cys-98. Tyr-60 is modified (3'-nitrotyrosine). 65–69 serves as a coordination point for substrate; it reads KNQNT. N-linked (GlcNAc...) asparagine glycans are attached at residues Asn-86, Asn-92, Asn-111, and Asn-119. Catalysis depends on His-156, which acts as the Proton donor.

The protein belongs to the pancreatic ribonuclease family. In terms of assembly, interacts with and forms a tight 1:1 complex with RNH1. Dimerization of two such complexes may occur.

Its subcellular location is the lysosome. It is found in the cytoplasmic granule. It carries out the reaction an [RNA] containing cytidine + H2O = an [RNA]-3'-cytidine-3'-phosphate + a 5'-hydroxy-ribonucleotide-3'-[RNA].. The enzyme catalyses an [RNA] containing uridine + H2O = an [RNA]-3'-uridine-3'-phosphate + a 5'-hydroxy-ribonucleotide-3'-[RNA].. This is a non-secretory ribonuclease. It is a pyrimidine specific nuclease with a slight preference for U. Cytotoxin and helminthotoxin. Possesses a wide variety of biological activities. This chain is Non-secretory ribonuclease (RNASE2), found in Gorilla gorilla gorilla (Western lowland gorilla).